The chain runs to 165 residues: Pro-MCH (165 aa).

A signal peptide spans 1-21 (MAKMSLSSYLLILTFSLFSQG). The tract at residues 68–88 (NDDSSFMNDEENKNSKNTGSK) is disordered. Isoleucine 143 is modified (isoleucine amide). Cysteine 153 and cysteine 162 are oxidised to a cystine.

This sequence belongs to the melanin-concentrating hormone family. In terms of processing, pro-MCH is processed differentially in the brain and in peripheral organs producing two neuropeptides; NEI and MCH. A third peptide, NGE, may also be produced. Preferential processing in neurons by prohormone convertase 2 (PC2) generates NEI. MCH is generated in neurons of the lateral hypothalmic area by several prohormone convertases including PC1/3, PC2 and PC5/6.

It is found in the secreted. MCH may act as a neurotransmitter or neuromodulator in a broad array of neuronal functions directed toward the regulation of goal-directed behavior, such as food intake, and general arousal. The protein is Pro-MCH (PMCH) of Canis lupus familiaris (Dog).